A 153-amino-acid polypeptide reads, in one-letter code: Ribosome maturation factor RimP (153 aa).

This sequence belongs to the RimP family.

Its subcellular location is the cytoplasm. Required for maturation of 30S ribosomal subunits. The polypeptide is Ribosome maturation factor RimP (Clostridioides difficile (strain 630) (Peptoclostridium difficile)).